The sequence spans 205 residues: Transcriptional regulator GfcR (205 aa).

This sequence belongs to the purine/pyrimidine phosphoribosyltransferase family. GfcR subfamily.

In Methanococcus maripaludis (strain DSM 14266 / JCM 13030 / NBRC 101832 / S2 / LL), this protein is Transcriptional regulator GfcR.